The sequence spans 161 residues: Protein-export protein SecB (161 aa).

It belongs to the SecB family. Homotetramer, a dimer of dimers. One homotetramer interacts with 1 SecA dimer.

The protein localises to the cytoplasm. One of the proteins required for the normal export of preproteins out of the cell cytoplasm. It is a molecular chaperone that binds to a subset of precursor proteins, maintaining them in a translocation-competent state. It also specifically binds to its receptor SecA. The chain is Protein-export protein SecB from Shewanella pealeana (strain ATCC 700345 / ANG-SQ1).